The primary structure comprises 333 residues: Foldase protein PrsA (333 aa).

Residues 1-22 (MKSAKQIATALLVGMFTFSAVG) form the signal peptide. Cys23 carries N-palmitoyl cysteine lipidation. Cys23 is lipidated: S-diacylglycerol cysteine. In terms of domain architecture, PpiC spans 192 to 283 (PNTVHLAHIL…FGWHVIKCIK (92 aa)).

The protein belongs to the PrsA family.

It is found in the cell membrane. It carries out the reaction [protein]-peptidylproline (omega=180) = [protein]-peptidylproline (omega=0). Functionally, plays a major role in protein secretion by helping the post-translocational extracellular folding of several secreted proteins. This Clostridium acetobutylicum (strain ATCC 824 / DSM 792 / JCM 1419 / IAM 19013 / LMG 5710 / NBRC 13948 / NRRL B-527 / VKM B-1787 / 2291 / W) protein is Foldase protein PrsA.